The following is a 764-amino-acid chain: 5-methyltetrahydropteroyltriglutamate--homocysteine methyltransferase (764 aa).

5-methyltetrahydropteroyltri-L-glutamate-binding positions include 16 to 19 (RELK) and Lys112. L-homocysteine contacts are provided by residues 431–433 (IGS) and Glu484. L-methionine-binding positions include 431-433 (IGS) and Glu484. Residues 515–516 (RC) and Trp561 each bind 5-methyltetrahydropteroyltri-L-glutamate. Position 599 (Asp599) interacts with L-homocysteine. Position 599 (Asp599) interacts with L-methionine. 5-methyltetrahydropteroyltri-L-glutamate is bound at residue Glu605. Zn(2+)-binding residues include His641, Cys643, and Glu665. The Proton donor role is filled by His694. Cys726 lines the Zn(2+) pocket.

This sequence belongs to the vitamin-B12 independent methionine synthase family. The cofactor is Zn(2+).

It catalyses the reaction 5-methyltetrahydropteroyltri-L-glutamate + L-homocysteine = tetrahydropteroyltri-L-glutamate + L-methionine. The protein operates within amino-acid biosynthesis; L-methionine biosynthesis via de novo pathway; L-methionine from L-homocysteine (MetE route): step 1/1. Functionally, catalyzes the transfer of a methyl group from 5-methyltetrahydrofolate to homocysteine resulting in methionine formation. This is 5-methyltetrahydropteroyltriglutamate--homocysteine methyltransferase from Paraburkholderia phytofirmans (strain DSM 17436 / LMG 22146 / PsJN) (Burkholderia phytofirmans).